The chain runs to 237 residues: Ribonuclease 3 (237 aa).

Residues Ile-7–Gly-135 enclose the RNase III domain. Mg(2+) is bound at residue Glu-48. Residue Asp-52 is part of the active site. The Mg(2+) site is built by Asn-121 and Glu-124. Glu-124 is an active-site residue. Residues Asn-160–Tyr-229 enclose the DRBM domain.

This sequence belongs to the ribonuclease III family. Homodimer. Mg(2+) serves as cofactor.

Its subcellular location is the cytoplasm. It catalyses the reaction Endonucleolytic cleavage to 5'-phosphomonoester.. In terms of biological role, digests double-stranded RNA. Involved in the processing of primary rRNA transcript to yield the immediate precursors to the large and small rRNAs (23S and 16S). Processes some mRNAs, and tRNAs when they are encoded in the rRNA operon. Processes pre-crRNA and tracrRNA of type II CRISPR loci if present in the organism. This is Ribonuclease 3 from Chlamydia felis (strain Fe/C-56) (Chlamydophila felis).